Reading from the N-terminus, the 249-residue chain is Methylthioribulose-1-phosphate dehydratase (249 aa).

H103 and H105 together coordinate Zn(2+).

This sequence belongs to the aldolase class II family. MtnB subfamily. It depends on Zn(2+) as a cofactor.

It catalyses the reaction 5-(methylsulfanyl)-D-ribulose 1-phosphate = 5-methylsulfanyl-2,3-dioxopentyl phosphate + H2O. It functions in the pathway amino-acid biosynthesis; L-methionine biosynthesis via salvage pathway; L-methionine from S-methyl-5-thio-alpha-D-ribose 1-phosphate: step 2/6. Catalyzes the dehydration of methylthioribulose-1-phosphate (MTRu-1-P) into 2,3-diketo-5-methylthiopentyl-1-phosphate (DK-MTP-1-P). The protein is Methylthioribulose-1-phosphate dehydratase of Leptospira interrogans serogroup Icterohaemorrhagiae serovar Lai (strain 56601).